We begin with the raw amino-acid sequence, 231 residues long: Large ribosomal subunit protein uL1 (231 aa).

The protein belongs to the universal ribosomal protein uL1 family. In terms of assembly, part of the 50S ribosomal subunit.

Functionally, binds directly to 23S rRNA. The L1 stalk is quite mobile in the ribosome, and is involved in E site tRNA release. Protein L1 is also a translational repressor protein, it controls the translation of the L11 operon by binding to its mRNA. In Caldanaerobacter subterraneus subsp. tengcongensis (strain DSM 15242 / JCM 11007 / NBRC 100824 / MB4) (Thermoanaerobacter tengcongensis), this protein is Large ribosomal subunit protein uL1.